The following is a 109-amino-acid chain: Parvalbumin alpha (109 aa).

EF-hand domains follow at residues 38–73 and 77–109; these read KTDAQVKEVFEILDKDQSGFIEEEELKGVLKGFSAH and LNDTETKALLAAGDSDHDGKIGADEFAKMVAQA. 9 residues coordinate Ca(2+): Asp-51, Asp-53, Ser-55, Glu-62, Asp-90, Asp-92, Asp-94, Lys-96, and Glu-101.

This sequence belongs to the parvalbumin family.

In terms of biological role, in muscle, parvalbumin is thought to be involved in relaxation after contraction. It binds two calcium ions. This Triakis semifasciata (Leopard shark) protein is Parvalbumin alpha.